Here is a 155-residue protein sequence, read N- to C-terminus: Lipoprotein signal peptidase (155 aa).

Helical transmembrane passes span 52–72 (ILQGQMWFFYVITLVVIAGIV) and 85–105 (LGVALALMLGGAIGNFIDRVF). Catalysis depends on residues D111 and D129. The chain crosses the membrane as a helical span at residues 124 to 144 (IFNIADSSLCVGVILLFIQML).

The protein belongs to the peptidase A8 family.

It is found in the cell membrane. The catalysed reaction is Release of signal peptides from bacterial membrane prolipoproteins. Hydrolyzes -Xaa-Yaa-Zaa-|-(S,diacylglyceryl)Cys-, in which Xaa is hydrophobic (preferably Leu), and Yaa (Ala or Ser) and Zaa (Gly or Ala) have small, neutral side chains.. It participates in protein modification; lipoprotein biosynthesis (signal peptide cleavage). In terms of biological role, this protein specifically catalyzes the removal of signal peptides from prolipoproteins. The chain is Lipoprotein signal peptidase from Bacillus pumilus (strain SAFR-032).